The sequence spans 569 residues: Potassium-transporting ATPase potassium-binding subunit (569 aa).

A run of 10 helical transmembrane segments spans residues 3-23, 64-84, 133-153, 179-199, 255-275, 281-301, 375-395, 421-441, 497-517, and 535-555; these read TEILGVALQILLLLVISYPLG, FLKSLLIINVFWFFWGMILLV, FVIMLFQFITAATGMAAMAGI, ILFPMSLIVGFILIIQGTPMG, IVECWSILIIPMALVFALGFY, LGYVIYGVMLFAYLLGVFCNV, FGGVGVGFMNYYAFLIIAVFI, IVSLAHPFVILIFTAISSYVW, LALIISRYLPIVGQVAIAGLL, and VTFGVMTFFVIVIVAALSFFP.

This sequence belongs to the KdpA family. In terms of assembly, the system is composed of three essential subunits: KdpA, KdpB and KdpC.

The protein resides in the cell inner membrane. Part of the high-affinity ATP-driven potassium transport (or Kdp) system, which catalyzes the hydrolysis of ATP coupled with the electrogenic transport of potassium into the cytoplasm. This subunit binds the periplasmic potassium ions and delivers the ions to the membrane domain of KdpB through an intramembrane tunnel. In Parabacteroides distasonis (strain ATCC 8503 / DSM 20701 / CIP 104284 / JCM 5825 / NCTC 11152), this protein is Potassium-transporting ATPase potassium-binding subunit.